Consider the following 572-residue polypeptide: Putative inorganic phosphate transporter C8E4.01c (572 aa).

At 1 to 47 (MAFGSKILNIGSKSDEYNDDAVPLDQVEEGAQERRYYLGLTKREFKL) the chain is on the cytoplasmic side. Phosphoserine is present on residues Ser12 and Ser14. The helical transmembrane segment at 48–68 (MMLAGVGFFLDSYDLFIINLV) threads the bilayer. Residues 69-99 (TPIFEYLYWGGIEKGPTGKGHYPSGIRGLVN) are Extracellular-facing. A helical membrane pass occupies residues 100-120 (ASANIGNIFGQLLFGFMGDFF). The Cytoplasmic segment spans residues 121–123 (GRK). A helical transmembrane segment spans residues 124–144 (FVYGKEMVIVIIATVLVIAMP). Residues 145 to 153 (KSIHSPLSK) lie on the Extracellular side of the membrane. The chain crosses the membrane as a helical span at residues 154 to 174 (MMWVFCWRWLLGVGIGGDYPM). The Cytoplasmic portion of the chain corresponds to 175-193 (SAAITSERSKIKRRGTLIS). Residues 194–214 (LIFAFQGFGTLAGAIVTIILL) traverse the membrane as a helical segment. The Extracellular portion of the chain corresponds to 215–229 (GCFEHPLNREGHYHK). The helical transmembrane segment at 230–250 (LEGVWRLQFGLALVPAIGVLI) threads the bilayer. Over 251 to 346 (PRLIMKESKS…TYFRQWRHFK (96 aa)) the chain is Cytoplasmic. A disordered region spans residues 265-297 (KALNSAEGKDPKAFFNTDDEDNMKKSSSHGDSE). Residues 286–296 (NMKKSSSHGDS) show a composition bias toward basic and acidic residues. Phosphoserine occurs at positions 292 and 296. The helical transmembrane segment at 347 to 367 (HLLGTSVCWFLLDIAFYGVNL) threads the bilayer. The Extracellular portion of the chain corresponds to 368 to 395 (NQSVILKNIGFSTGTNEYRTLMKNAIGN). A helical membrane pass occupies residues 396 to 416 (LIIAVAGYVPGYWFNVFLVEI). Residues 417 to 420 (LGRK) lie on the Cytoplasmic side of the membrane. A helical membrane pass occupies residues 421–441 (WIQLQGFVITGLMFAILAGRW). Residues 442 to 449 (NEISTGGR) are Extracellular-facing. A helical membrane pass occupies residues 450-470 (FACFVIAQLFSNFGPNSTTFI). Residues 471-485 (YPAEVFPARVRGTAH) are Cytoplasmic-facing. A helical transmembrane segment spans residues 486-506 (GVSAALGKCGAILASLLFNFL). At 507–508 (TG) the chain is on the extracellular side. A helical membrane pass occupies residues 509 to 529 (VIGYGNVMWIFCGCMWGGILF). The Cytoplasmic segment spans residues 530-572 (TLLLPETKGRDADEIDRLELFYGKDGKVQCDSKWKSWYFNGIF).

This sequence belongs to the major facilitator superfamily. Sugar transporter (TC 2.A.1.1) family.

The protein resides in the membrane. Its function is as follows. High-affinity transporter for external inorganic phosphate. This is Putative inorganic phosphate transporter C8E4.01c from Schizosaccharomyces pombe (strain 972 / ATCC 24843) (Fission yeast).